We begin with the raw amino-acid sequence, 90 residues long: Photosystem I reaction center subunit PsaK 2 (90 aa).

2 helical membrane passes run 20-42 and 67-89; these read LSVG…FAIQ and LATM…SSGI.

The protein belongs to the PsaG/PsaK family.

It is found in the cellular thylakoid membrane. The sequence is that of Photosystem I reaction center subunit PsaK 2 (psaK2) from Synechocystis sp. (strain ATCC 27184 / PCC 6803 / Kazusa).